The chain runs to 303 residues: Probable 5-dehydro-4-deoxyglucarate dehydratase (303 aa).

This sequence belongs to the DapA family.

It catalyses the reaction 5-dehydro-4-deoxy-D-glucarate + H(+) = 2,5-dioxopentanoate + CO2 + H2O. It functions in the pathway carbohydrate acid metabolism; D-glucarate degradation; 2,5-dioxopentanoate from D-glucarate: step 2/2. This chain is Probable 5-dehydro-4-deoxyglucarate dehydratase, found in Acinetobacter baumannii (strain SDF).